Reading from the N-terminus, the 360-residue chain is Protein Wnt-2 (360 aa).

An N-terminal signal peptide occupies residues 1-25 (MNAPLGGIWLWLPLLLTWLTPEVSS). Cystine bridges form between C76–C87, C127–C135, C137–C157, C206–C220, C208–C215, C278–C309, C294–C304, C308–C348, C324–C339, C326–C336, and C331–C332. S212 carries the O-palmitoleoyl serine; by PORCN lipid modification. N-linked (GlcNAc...) asparagine glycosylation is present at N295.

The protein belongs to the Wnt family. In terms of processing, palmitoleoylation is required for efficient binding to frizzled receptors. Depalmitoleoylation leads to Wnt signaling pathway inhibition.

It is found in the secreted. It localises to the extracellular space. The protein resides in the extracellular matrix. Ligand for members of the frizzled family of seven transmembrane receptors. Functions in the canonical Wnt signaling pathway that results in activation of transcription factors of the TCF/LEF family. Functions as a upstream regulator of FGF10 expression. Plays an important role in embryonic lung development. May contribute to embryonic brain development by regulating the proliferation of dopaminergic precursors and neurons. This Equus caballus (Horse) protein is Protein Wnt-2 (WNT2).